The primary structure comprises 41 residues: Cytochrome b559 subunit beta (41 aa).

The helical transmembrane segment at Trp16–Ser32 threads the bilayer. His20 provides a ligand contact to heme.

Belongs to the PsbE/PsbF family. As to quaternary structure, heterodimer of an alpha subunit and a beta subunit. PSII is composed of 1 copy each of membrane proteins PsbA, PsbB, PsbC, PsbD, PsbE, PsbF, PsbH, PsbI, PsbJ, PsbK, PsbL, PsbM, PsbT, PsbX, PsbY, PsbZ, Psb30/Ycf12, at least 3 peripheral proteins of the oxygen-evolving complex and a large number of cofactors. It forms dimeric complexes. Heme b serves as cofactor.

The protein resides in the plastid. It localises to the chloroplast thylakoid membrane. This b-type cytochrome is tightly associated with the reaction center of photosystem II (PSII). PSII is a light-driven water:plastoquinone oxidoreductase that uses light energy to abstract electrons from H(2)O, generating O(2) and a proton gradient subsequently used for ATP formation. It consists of a core antenna complex that captures photons, and an electron transfer chain that converts photonic excitation into a charge separation. In Oltmannsiellopsis viridis (Marine flagellate), this protein is Cytochrome b559 subunit beta.